The following is a 556-amino-acid chain: Formate--tetrahydrofolate ligase (556 aa).

65-72 (TPAGEGKS) contributes to the ATP binding site.

This sequence belongs to the formate--tetrahydrofolate ligase family.

It carries out the reaction (6S)-5,6,7,8-tetrahydrofolate + formate + ATP = (6R)-10-formyltetrahydrofolate + ADP + phosphate. It functions in the pathway one-carbon metabolism; tetrahydrofolate interconversion. The protein is Formate--tetrahydrofolate ligase of Streptococcus pneumoniae serotype 19F (strain G54).